Here is a 523-residue protein sequence, read N- to C-terminus: 26S proteasome regulatory subunit RPN3 (523 aa).

A2 carries the N-acetylalanine modification. Positions 270–450 (ARYFFYLSKI…GFIETTELLN (181 aa)) constitute a PCI domain. S454 is modified (phosphoserine). Positions 480–495 (RYPEDKKTQQNEKSEN) are enriched in basic and acidic residues. The interval 480–523 (RYPEDKKTQQNEKSENGENDDDTLDGDLMDDMSDISDLDDLGFL) is disordered. Positions 496–523 (GENDDDTLDGDLMDDMSDISDLDDLGFL) are enriched in acidic residues.

The protein belongs to the proteasome subunit S3 family. The 26S proteasome is composed of a core protease, known as the 20S proteasome, capped at one or both ends by the 19S regulatory complex (RC). The RC is composed of at least 18 different subunits in two subcomplexes, the base and the lid, which form the portions proximal and distal to the 20S proteolytic core, respectively. Post-translationally, N-acetylated by NAT1.

Acts as a regulatory subunit of the 26S proteasome which is involved in the ATP-dependent degradation of ubiquitinated proteins. This is 26S proteasome regulatory subunit RPN3 (RPN3) from Saccharomyces cerevisiae (strain ATCC 204508 / S288c) (Baker's yeast).